Here is a 722-residue protein sequence, read N- to C-terminus: Polyribonucleotide nucleotidyltransferase (722 aa).

Mg(2+) contacts are provided by Asp495 and Asp501. Positions 562 to 621 constitute a KH domain; that stretch reads PRLLSFRIDPELIGTVIGPGGRTIKGITERTNTKIDIEDGGIVTIASHDGVAAEEAQKII. Positions 631–699 constitute an S1 motif domain; sequence GEIFTGSITR…NRGRINLTLR (69 aa). Residues 701–711 show a composition bias toward polar residues; sequence VSQNNNDMNYP. The segment at 701–722 is disordered; the sequence is VSQNNNDMNYPQPTPTPVAPLN. Residues 712 to 722 are compositionally biased toward pro residues; sequence QPTPTPVAPLN.

The protein belongs to the polyribonucleotide nucleotidyltransferase family. Mg(2+) serves as cofactor.

It localises to the cytoplasm. It catalyses the reaction RNA(n+1) + phosphate = RNA(n) + a ribonucleoside 5'-diphosphate. In terms of biological role, involved in mRNA degradation. Catalyzes the phosphorolysis of single-stranded polyribonucleotides processively in the 3'- to 5'-direction. This chain is Polyribonucleotide nucleotidyltransferase, found in Prochlorococcus marinus (strain MIT 9211).